We begin with the raw amino-acid sequence, 321 residues long: MAPAFLLLLLLWPQGCVSGPSADSVYTKVRLLEGETLSVQCSYKGYKNRVEGKVWCKIRKKKCEPGFARVWVKGPRYLLQDDAQAKVVNITMVALKLQDSGRYWCMRNTSGILYPLMGFQLDVSPAPQTERNIPFTHLDNILKSGTVTTGQAPTSGPDAPFTTGVMVFTPGLITLPRLLASTRPASKTGYSFTATSTTSQGPRRTMGSQTVTASPSNARDSSAGPESISTKSGDLSTRSPTTGLCLTSRSLLNRLPSMPSIRHQDVYSTVLGVVLTLLVLMLIMVYGFWKKRHMASYSMCSDPSTRDPPGRPEPYVEVYLI.

A signal peptide spans 1-18 (MAPAFLLLLLLWPQGCVS). Residues 19 to 268 (GPSADSVYTK…PSIRHQDVYS (250 aa)) lie on the Extracellular side of the membrane. Residues 20-121 (PSADSVYTKV…ILYPLMGFQL (102 aa)) form the Ig-like V-type domain. 2 disulfides stabilise this stretch: cysteine 41–cysteine 105 and cysteine 56–cysteine 63. The N-linked (GlcNAc...) asparagine glycan is linked to asparagine 89. 2 stretches are compositionally biased toward polar residues: residues 189 to 220 (GYSFTATSTTSQGPRRTMGSQTVTASPSNARD) and 227 to 241 (SISTKSGDLSTRSPT). Residues 189 to 241 (GYSFTATSTTSQGPRRTMGSQTVTASPSNARDSSAGPESISTKSGDLSTRSPT) are disordered. Residues 269 to 289 (TVLGVVLTLLVLMLIMVYGFW) traverse the membrane as a helical segment. Residues 290–321 (KKRHMASYSMCSDPSTRDPPGRPEPYVEVYLI) lie on the Cytoplasmic side of the membrane.

In terms of assembly, interacts with CD276 and this interaction enhances T-cell activation. As to expression, detected in cultured B-cells, T-cell leukemia and monocyte leukemia. Expressed constitutively on CD8 T-cells and induced on CD4 T-cells after activation.

It is found in the cell membrane. Functionally, cell surface receptor that may play a role in the innate and adaptive immune response. Acts as a counter-receptor for CD276 and interaction with CD276 on T-cells enhances T-cell activation. This Homo sapiens (Human) protein is Trem-like transcript 2 protein (TREML2).